We begin with the raw amino-acid sequence, 179 residues long: ATP synthase subunit delta, chloroplastic (179 aa).

Belongs to the ATPase delta chain family. In terms of assembly, F-type ATPases have 2 components, F(1) - the catalytic core - and F(0) - the membrane proton channel. F(1) has five subunits: alpha(3), beta(3), gamma(1), delta(1), epsilon(1). CF(0) has four main subunits: a(1), b(1), b'(1) and c(10-14). The alpha and beta chains form an alternating ring which encloses part of the gamma chain. F(1) is attached to F(0) by a central stalk formed by the gamma and epsilon chains, while a peripheral stalk is formed by the delta, b and b' chains.

The protein resides in the plastid. Its subcellular location is the chloroplast thylakoid membrane. Functionally, f(1)F(0) ATP synthase produces ATP from ADP in the presence of a proton or sodium gradient. F-type ATPases consist of two structural domains, F(1) containing the extramembraneous catalytic core and F(0) containing the membrane proton channel, linked together by a central stalk and a peripheral stalk. During catalysis, ATP synthesis in the catalytic domain of F(1) is coupled via a rotary mechanism of the central stalk subunits to proton translocation. Its function is as follows. This protein is part of the stalk that links CF(0) to CF(1). It either transmits conformational changes from CF(0) to CF(1) or is implicated in proton conduction. This chain is ATP synthase subunit delta, chloroplastic, found in Ochrosphaera neapolitana.